The sequence spans 120 residues: Large ribosomal subunit protein uL18 (120 aa).

This sequence belongs to the universal ribosomal protein uL18 family. As to quaternary structure, part of the 50S ribosomal subunit; part of the 5S rRNA/L5/L18/L25 subcomplex. Contacts the 5S and 23S rRNAs.

This is one of the proteins that bind and probably mediate the attachment of the 5S RNA into the large ribosomal subunit, where it forms part of the central protuberance. This Bacillus cytotoxicus (strain DSM 22905 / CIP 110041 / 391-98 / NVH 391-98) protein is Large ribosomal subunit protein uL18.